The chain runs to 303 residues: MYYGFDVGGTKIEFGAFNEKLERVATERVPTPTDDYPLLLETIAGLVAKYDQEFACEGKIGLGLPGMEDADDATVLTVNVPAAKGKPLRADLEAKIGRSVKIENDANCFALSEAWDEELQDAPSVMGLILGTGFGGGLIYEGKVFSGRNNVAGELGHMRLPLDAWFHLGDNAPLLGCGCGKKGCLDSYLSGRGFELLYAHYYGEEKKAIDIIKANAAGDEKAAEHVERFMELLAICFGNIFTANDPHVVALGGGLSNFELIYEEMPKRVPKYLLSVAKCPKIIKAKHGDSGGVRGAAFLNIKG.

Residues 4–11 and 133–140 each bind ATP; these read GFDVGGTK and GFGGGLIY. Residues histidine 157, cysteine 177, cysteine 179, and cysteine 184 each contribute to the Zn(2+) site.

Belongs to the ROK (NagC/XylR) family. NagK subfamily.

It carries out the reaction N-acetyl-D-glucosamine + ATP = N-acetyl-D-glucosamine 6-phosphate + ADP + H(+). The protein operates within cell wall biogenesis; peptidoglycan recycling. Functionally, catalyzes the phosphorylation of N-acetyl-D-glucosamine (GlcNAc) derived from cell-wall degradation, yielding GlcNAc-6-P. This chain is N-acetyl-D-glucosamine kinase, found in Vibrio vulnificus (strain CMCP6).